The primary structure comprises 163 residues: Interleukin-31 (163 aa).

The signal sequence occupies residues 1–23 (MIFHTGTTKPTLVLLCCIGTWLA). N-linked (GlcNAc...) asparagine glycans are attached at residues Asn55, Asn84, and Asn124.

It is found in the secreted. Activates STAT3 and possibly STAT1 and STAT5 through the IL31 heterodimeric receptor composed of IL31RA and OSMR. May function in skin immunity. Enhances myeloid progenitor cell survival in vitro. Induces RETNLA and serum amyloid A protein expression in macrophages. The protein is Interleukin-31 (Il31) of Mus musculus (Mouse).